Reading from the N-terminus, the 133-residue chain is Ubiquitin-like FUBI-ribosomal protein eS30 fusion protein (133 aa).

The 74-residue stretch at 1–74 (MQLFVRAQEL…LEVAGRMLGG (74 aa)) folds into the Ubiquitin-like domain. Lys125 is subject to N6-succinyllysine.

The protein in the N-terminal section; belongs to the ubiquitin family. This sequence in the C-terminal section; belongs to the eukaryotic ribosomal protein eS30 family. In terms of assembly, component of the 40S subunit of the ribosome. In terms of processing, FUBI is cleaved from ribosomal protein S30 by the deubiquitinase USP36 before the assembly of ribosomal protein S30 into pre-40S ribosomal particles. FUBI removal from ribosomal protein S30 is a crucial event for the final maturation of pre-40S particles.

The protein resides in the cytoplasm. It is found in the nucleus. May have pro-apoptotic activity. Its function is as follows. Component of the 40S subunit of the ribosome. Contributes to the assembly and function of 40S ribosomal subunits. This Oryctolagus cuniculus (Rabbit) protein is Ubiquitin-like FUBI-ribosomal protein eS30 fusion protein (FAU).